A 416-amino-acid chain; its full sequence is tRNA (guanine-N(7)-)-methyltransferase non-catalytic subunit wuho (416 aa).

Positions 47–88 (TQSQESCPATATSTTAGKEPGGKEQQLAKQPEEGGTSASGSV) are disordered. Residues 49 to 62 (SQESCPATATSTTA) show a composition bias toward polar residues. WD repeat units lie at residues 89-130 (ATST…ARLL), 177-216 (GHLS…DIHS), 220-258 (GHRE…ELLQ), and 317-357 (AGSW…PTTN).

The protein belongs to the WD repeat TRM82 family. Forms a heterodimer with the catalytic subunit Mettl1. Interacts with mei-P26 and weakly interacts with bgcn; required for the function or formation of the mei-P26-bgcn-bam-sxl complex. Interacts with nanos; may be involved in mei-P26-dependent derepression of the BMP signaling pathway. Interacts with Myc; the interaction may be mediated by mei-P26 and may be involved in the regulation of ribosome biogenesis. In testis, it is present at high level in hub cells, a niche for germline stem cells of testis. Ubiquitously expressed in all testicular cells throughout spermatogenesis. Ubiquitously expressed in all germline and somatic cells of the ovary.

The protein resides in the nucleus. The protein localises to the cytoplasm. It functions in the pathway tRNA modification; N(7)-methylguanine-tRNA biosynthesis. In terms of biological role, required for the Mettl1-dependent formation of N(7)-methylguanine at position 46 (m7G46) in tRNA. In the Mettl1-wuho methyltransferase complex, it is required to stabilize and induce conformational changes of the catalytic subunit. Required for binding of nanos mRNA and repression of translation by the mei-P26-bgcn-bam-sxl complex. May cooperate with mei-P26 and nanos to derepress the BMP signaling pathway. May cooperate with mei-P26 to suppress expression of a subset of microRNAs. May cooperate with mei-P26 to regulate bam expression levels in germline cells during gametogenesis. Required to promote mitosis to meiosis transition during gametogenesis. May regulate germline cell division in part by regulating ribosome biogenesis. This Drosophila erecta (Fruit fly) protein is tRNA (guanine-N(7)-)-methyltransferase non-catalytic subunit wuho.